Reading from the N-terminus, the 629-residue chain is tRNA uridine 5-carboxymethylaminomethyl modification enzyme MnmG (629 aa).

Residues 13–18, Val-125, and Ser-180 each bind FAD; that span reads GGGHAG. Position 273–287 (273–287) interacts with NAD(+); the sequence is GPRYCPSIEDKVMRF. Residue Gln-370 participates in FAD binding.

Belongs to the MnmG family. As to quaternary structure, homodimer. Heterotetramer of two MnmE and two MnmG subunits. FAD is required as a cofactor.

The protein resides in the cytoplasm. Its function is as follows. NAD-binding protein involved in the addition of a carboxymethylaminomethyl (cmnm) group at the wobble position (U34) of certain tRNAs, forming tRNA-cmnm(5)s(2)U34. This is tRNA uridine 5-carboxymethylaminomethyl modification enzyme MnmG from Escherichia coli O127:H6 (strain E2348/69 / EPEC).